A 319-amino-acid chain; its full sequence is MTLAAWFAAFLLDSWLGDPPHWPHPVRWIGKLISLVQRAVRRCCHSERALKVGGAGLWIVVVGLTWLVSWGCLWLMNAIHPWVGWLVEVWMIYTLLAGRCLSDTALEVHGVLQQGLLDESRQQLSWIVGRDTSQLDAPQITRAVVETVAENSVDGVIAPLFFLMIGGAPLAMAYKAINTLDSMVGYKTQEYHAIGYVSARMDDLANWLPARLSWLLLSAAAWFIRLDFRQALRIGWRDRYQHTSPNCGWSEATVAGALGIRLGGPSCYFGERVEKPWMGDERRKIALTDIPLSIYLMMIASQLALLLFALLRLLLVGMA.

4 helical membrane passes run 56–76 (GLWI…LWLM), 153–173 (VDGV…LAMA), 204–224 (LANW…AWFI), and 290–310 (IPLS…LFAL).

The protein belongs to the CobD/CbiB family.

It localises to the cell membrane. The protein operates within cofactor biosynthesis; adenosylcobalamin biosynthesis. Converts cobyric acid to cobinamide by the addition of aminopropanol on the F carboxylic group. The polypeptide is Cobalamin biosynthesis protein CobD (Photorhabdus laumondii subsp. laumondii (strain DSM 15139 / CIP 105565 / TT01) (Photorhabdus luminescens subsp. laumondii)).